The primary structure comprises 178 residues: Gamma-crystallin S (178 aa).

Ser-2 carries the post-translational modification N-acetylserine. The N-terminal arm stretch occupies residues Ser-2 to Gly-5. Beta/gamma crystallin 'Greek key' domains follow at residues Thr-6–Gly-44 and Gly-45–His-87. Residues Leu-88–Gln-93 form a connecting peptide region. 2 Beta/gamma crystallin 'Greek key' domains span residues Tyr-94–Glu-134 and Gly-135–Val-177.

Belongs to the beta/gamma-crystallin family. As to quaternary structure, monomer.

In terms of biological role, crystallins are the dominant structural components of the vertebrate eye lens. This Homo sapiens (Human) protein is Gamma-crystallin S (CRYGS).